A 470-amino-acid chain; its full sequence is Proline--tRNA ligase (470 aa).

This sequence belongs to the class-II aminoacyl-tRNA synthetase family. ProS type 3 subfamily. As to quaternary structure, homodimer.

It localises to the cytoplasm. It carries out the reaction tRNA(Pro) + L-proline + ATP = L-prolyl-tRNA(Pro) + AMP + diphosphate. Functionally, catalyzes the attachment of proline to tRNA(Pro) in a two-step reaction: proline is first activated by ATP to form Pro-AMP and then transferred to the acceptor end of tRNA(Pro). The chain is Proline--tRNA ligase from Malacoplasma penetrans (strain HF-2) (Mycoplasma penetrans).